The chain runs to 440 residues: 3-phosphoshikimate 1-carboxyvinyltransferase (440 aa).

Residues Lys-19, Ser-20, and Arg-24 each contribute to the 3-phosphoshikimate site. A phosphoenolpyruvate-binding site is contributed by Lys-19. The phosphoenolpyruvate site is built by Gly-92 and Arg-121. 3-phosphoshikimate is bound by residues Ser-166, Gln-168, Asp-315, and Lys-342. Phosphoenolpyruvate is bound at residue Gln-168. The Proton acceptor role is filled by Asp-315. Positions 346 and 399 each coordinate phosphoenolpyruvate.

Belongs to the EPSP synthase family. In terms of assembly, monomer.

The protein resides in the cytoplasm. It catalyses the reaction 3-phosphoshikimate + phosphoenolpyruvate = 5-O-(1-carboxyvinyl)-3-phosphoshikimate + phosphate. It functions in the pathway metabolic intermediate biosynthesis; chorismate biosynthesis; chorismate from D-erythrose 4-phosphate and phosphoenolpyruvate: step 6/7. Its function is as follows. Catalyzes the transfer of the enolpyruvyl moiety of phosphoenolpyruvate (PEP) to the 5-hydroxyl of shikimate-3-phosphate (S3P) to produce enolpyruvyl shikimate-3-phosphate and inorganic phosphate. The sequence is that of 3-phosphoshikimate 1-carboxyvinyltransferase from Leptospira interrogans serogroup Icterohaemorrhagiae serovar copenhageni (strain Fiocruz L1-130).